Here is a 223-residue protein sequence, read N- to C-terminus: DNA mismatch repair protein MutH (223 aa).

The protein belongs to the MutH family.

Its subcellular location is the cytoplasm. Its function is as follows. Sequence-specific endonuclease that cleaves unmethylated GATC sequences. It is involved in DNA mismatch repair. The sequence is that of DNA mismatch repair protein MutH from Shewanella baltica (strain OS185).